The primary structure comprises 182 residues: Succinate dehydrogenase [ubiquinone] cytochrome b small subunit, mitochondrial (182 aa).

At 1-71 the chain is on the mitochondrial matrix side; that stretch reads MSLSLLLRGA…SAPRMASAGS (71 aa). A helical membrane pass occupies residues 72-96; sequence SHTLLWTVERIVSAGLLAVIPAAFI. The Mitochondrial intermembrane portion of the chain corresponds to 97–101; sequence APSQV. A helical transmembrane segment spans residues 102–122; that stretch reads LDALMAISVVIHTHWGVEAMV. His113 serves as a coordination point for heme. Residues 123 to 135 lie on the Mitochondrial matrix side of the membrane; it reads VDYMRPSVVGNVL. Tyr125 is an a ubiquinone binding site. A helical membrane pass occupies residues 136–157; sequence PKVAHIALIIISVATLGGLFYF. Topologically, residues 158–182 are mitochondrial intermembrane; sequence IQNDVGLANGIKRFWAIKGKDAEKA.

Belongs to the CybS family. As to quaternary structure, forms part of complex II containing four subunits: a flavoprotein (FP), an iron-sulfur protein (IP) and a cytochrome b composed of a large and a small subunit.

The protein localises to the mitochondrion inner membrane. It functions in the pathway carbohydrate metabolism; tricarboxylic acid cycle. Functionally, membrane-anchoring subunit of succinate dehydrogenase (SDH) that is involved in complex II of the mitochondrial electron transport chain and is responsible for transferring electrons from succinate to ubiquinone (coenzyme Q). This is Succinate dehydrogenase [ubiquinone] cytochrome b small subunit, mitochondrial from Drosophila melanogaster (Fruit fly).